Here is a 193-residue protein sequence, read N- to C-terminus: MDDLLAELKSEMDAAGVDADVEFSLPTLELTAALDATIDDTSQLYTDDPPHHYTDTPLTGDDLPLLEAWLDDAQLHGVGDDIIAEYIDEVLLVLITVRGGACGKELLQDVRRLFGADVSPGTMYPHLKQLADAGLLEMSELTKRKVYRVADAQAAIEHVDSVVLQLLTFAVGLQTIMADCIVNQSADPQPQDE.

DNA is bound at residue Lys-143–Arg-148. The leucine-zipper stretch occupies residues Gln-153–Gln-184.

Homodimer. Interacts with endogenous GvpD, also with GvpD from H.mediterranei.

The protein localises to the cytoplasm. With respect to regulation, degraded once GvpD is translated; degradation requires 'Arg-494' of GvpD; tested in transgenic H.volcanii. Fusion of green fluorescent protein to its C-terminus partially protects it from degradation. Its function is as follows. Plays a regulatory role in gas vesicle synthesis, required to activate transcription of the c-gvpA operon. Gas vesicles are hollow, gas filled proteinaceous nanostructures found in several microbial planktonic microorganisms. They allow positioning of halobacteria at the optimal depth for growth in the poorly aerated, shallow brine pools of their habitat. In terms of biological role, expression of 2 c-vac DNA fragments containing 2 divergently transcribed regions (gvpE-gvpF-gvpG-gvpH-gvpI-gvpJ-gvpK-gvpL-gvpM and gvpA-gvpC-gvpN-gvpO) allows H.volcanii to produce gas vesicles. All site-directed mutagenesis is tested in H.volcanii. This is Transcriptional activator GvpE2 from Halobacterium salinarum (strain ATCC 700922 / JCM 11081 / NRC-1) (Halobacterium halobium).